A 129-amino-acid chain; its full sequence is Phosphoribosyl-AMP cyclohydrolase (129 aa).

Position 85 (Asp-85) interacts with Mg(2+). Cys-86 lines the Zn(2+) pocket. Mg(2+) contacts are provided by Asp-87 and Asp-89. 2 residues coordinate Zn(2+): Cys-102 and Cys-109.

The protein belongs to the PRA-CH family. In terms of assembly, homodimer. Mg(2+) is required as a cofactor. Requires Zn(2+) as cofactor.

Its subcellular location is the cytoplasm. The enzyme catalyses 1-(5-phospho-beta-D-ribosyl)-5'-AMP + H2O = 1-(5-phospho-beta-D-ribosyl)-5-[(5-phospho-beta-D-ribosylamino)methylideneamino]imidazole-4-carboxamide. The protein operates within amino-acid biosynthesis; L-histidine biosynthesis; L-histidine from 5-phospho-alpha-D-ribose 1-diphosphate: step 3/9. In terms of biological role, catalyzes the hydrolysis of the adenine ring of phosphoribosyl-AMP. The polypeptide is Phosphoribosyl-AMP cyclohydrolase (Methanococcus maripaludis (strain C6 / ATCC BAA-1332)).